The sequence spans 551 residues: Arginine--tRNA ligase (551 aa).

The short motif at 123–133 (ANPTGPLTIGR) is the 'HIGH' region element.

The protein belongs to the class-I aminoacyl-tRNA synthetase family. As to quaternary structure, monomer.

The protein localises to the cytoplasm. It carries out the reaction tRNA(Arg) + L-arginine + ATP = L-arginyl-tRNA(Arg) + AMP + diphosphate. This chain is Arginine--tRNA ligase, found in Chlorobaculum parvum (strain DSM 263 / NCIMB 8327) (Chlorobium vibrioforme subsp. thiosulfatophilum).